Consider the following 1474-residue polypeptide: SH3 and multiple ankyrin repeat domains protein 2 (1474 aa).

A compositionally biased stretch (polar residues) spans 66-76; sequence LSPQLLQQTPS. A disordered region spans residues 66-125; sequence LSPQLLQQTPSKPDGATKSLGSYAPGPRSRSPSLNRLGGAGEDGKRPQPPHWHVGSPFTP. Positions 148–207 constitute an SH3 domain; that stretch reads VPGRLFVAIKPYQPQVDGEIPLHRGDRVKVLSIGEGGFWEGSARGHIGWFPAECVEEVQC. Glutamine 162 is subject to Phosphoserine. One can recognise a PDZ domain in the interval 248–342; sequence TVVLQKKDNE…HLVLKVVTVT (95 aa). At serine 373 the chain carries Phosphoserine. The disordered stretch occupies residues 392 to 413; that stretch reads RKKKDKPEEIVPASKPSRTAEN. The residue at position 457 (serine 457) is a Phosphoserine. Threonine 486 carries the phosphothreonine modification. The interval 504 to 534 is disordered; that stretch reads LSMPDTSEDIPPPPQSVPPSPPPPSPTTYNC. The span at 513–529 shows a compositional bias: pro residues; it reads IPPPPQSVPPSPPPPSP. Position 586 is a phosphoserine (serine 586). Disordered stretches follow at residues 659-920, 947-995, and 1057-1153; these read TIIV…ADDK, PVAG…PAAA, and PALA…ESMD. Over residues 666–678 the composition is skewed to low complexity; the sequence is STSSSGKSSQGSS. Residues 711-722 show a composition bias toward basic and acidic residues; it reads VRDREKRLEARR. Serine 724 carries the post-translational modification Phosphoserine. A compositionally biased stretch (gly residues) spans 783–795; it reads LGGGEAGAQGEAG. Composition is skewed to low complexity over residues 811-823 and 833-846; these read PAAA…PASP and RLLD…LALS. Basic and acidic residues-rich tracts occupy residues 847 to 868 and 899 to 920; these read ARDR…KADL and RRQE…ADDK. Threonine 903 bears the Phosphothreonine mark. The span at 1075 to 1085 shows a compositional bias: polar residues; that stretch reads SLNSSQPANST. Basic and acidic residues predominate over residues 1119 to 1130; that stretch reads VDSRSSSDHHLE. Residues 1131-1151 show a composition bias toward low complexity; sequence TTSTISTVSSISTLSSEGGES. The SH3-binding signature appears at 1169–1175; sequence PPVPPKP. 2 disordered regions span residues 1195–1216 and 1260–1401; these read EDTD…SAQA and NRGK…ISNK. The span at 1202 to 1212 shows a compositional bias: pro residues; sequence IPPPAPPPPPG. The segment covering 1291-1305 has biased composition (low complexity); the sequence is STVSGTRSTTVTFTV. The O-linked (GlcNAc) threonine glycan is linked to threonine 1292. Over residues 1307 to 1317 the composition is skewed to polar residues; sequence PGTSQPITLQS. 2 positions are modified to phosphoserine: serine 1334 and serine 1338. Composition is skewed to low complexity over residues 1352 to 1363 and 1385 to 1399; these read SAAAASPSPTLS and RSRS…QPIS. Residues 1411–1474 enclose the SAM domain; it reads WTKPDVADWL…ERALKQLLDR (64 aa).

The protein belongs to the SHANK family. As to quaternary structure, is part of a complex with DLG4/PSD-95 and DLGAP1/GKAP. Interacts with CTTN/cortactin SH3 domain, DLGAP1/GKAP and alpha-latrotoxin receptor 1. Interacts with DNM2, DBNL, GRID2, BAIAP2, SLC9A3, PLCB3 and CFTR. Interacts with ABI1 (via SH3 domain). Interacts (via proline-rich region) with PDE4D isoform 5 (via N-terminal region). Interacts with PDE4D isoform 33, isoform 4, isoform 7, isoform 8 and isoform 9 but not isoform 32 and isoform 6. Interacts weakly with PDE4D isoform 31. Interacts with ABI1. As to expression, expressed in epithelial cells (at protein level). All isoforms except isoform 7 are expressed predominantly in brain, with highest levels in olfactory bulb, cerebral cortex, cerebellum, central gray matter and hippocampus. Moderate levels of expression are seen in the caudate putamen, thalamic nuclei and brain stem. In cerebellum primarily expressed in Purkinje cells. Isoform 7 is not expressed in brain but expressed in liver, cholangiocytes and thymus. Isoform 7 is present in pancreas, colonic mucosa and thymocytes (at protein level).

It is found in the apical cell membrane. The protein localises to the cytoplasm. Its subcellular location is the synapse. It localises to the postsynaptic density. The protein resides in the cell projection. It is found in the growth cone. The protein localises to the dendritic spine. Seems to be an adapter protein in the postsynaptic density (PSD) of excitatory synapses that interconnects receptors of the postsynaptic membrane including NMDA-type and metabotropic glutamate receptors, and the actin-based cytoskeleton. May play a role in the structural and functional organization of the dendritic spine and synaptic junction. This Rattus norvegicus (Rat) protein is SH3 and multiple ankyrin repeat domains protein 2 (Shank2).